Here is a 494-residue protein sequence, read N- to C-terminus: Probable cytochrome P450 313a4 (494 aa).

A heme-binding site is contributed by Cys440.

It belongs to the cytochrome P450 family. The cofactor is heme.

The protein localises to the endoplasmic reticulum membrane. The protein resides in the microsome membrane. In terms of biological role, may be involved in the metabolism of insect hormones and in the breakdown of synthetic insecticides. The chain is Probable cytochrome P450 313a4 (Cyp313a4) from Drosophila melanogaster (Fruit fly).